We begin with the raw amino-acid sequence, 657 residues long: MEPTASQGIQYLRGGVEWILKLLNLHILNVKHENKPLLFRLIDLKVYIPSSVSTVRWSSGASSYVILGEYRKMRSAVALLFLLVAYCGGVVHAGEIVAELYHTNVTVKWHTDYERQLVDFSIWFGASTPDVLFLGFSDFGDTNNSDVLMYYNSKKEIKDAYTNRDFKITSDLQQDFQLLRKRKDHIVVRRKLTTCDSRDYAFLPGTTQFYIAASWGSTNLVDIRDKRWVVDKKFGKVIEGPTDQPNIEEEPAALEKDVKVVIVNSNSPDPIPNVETTYKCIIRKMPFDTVNNMYHVVRMEPYVTPGNEHLVHHMEIFMCRDEVEEWSGSCNDPKKPPKSKSCSHVIAAWAMGEGPIHYPKEAGLPIGGKGKNAYVMVEIHYNNPELHKGVIDSSGFQFFVTGQLRKYDAGIMELGLIYSDANSVPPNQKAWAMNGYCPSQCTKNLPEEGINIFASQLHAHLTGRKLFTSQYRSGVRIGDVNRDEHYSPHWQHLQQLRPVVKVMPGDTLVTTCVYDTRKRSKVTFGGYRIVDEMCVNYIYYYPASDVEVCKSAISNSTLRAYFSERHGMDGKRMQISDMYSNVKDWGNGVDEEFYNVLNVGNMNMNCLKSNGEPFEFESKDSRQSWENMARPTFVSGSFITTRDRFQCPAINDMINFE.

Residues 77-97 traverse the membrane as a helical segment; sequence VALLFLLVAYCGGVVHAGEIV. The region spanning 103 to 214 is the DOMON domain; it reads TNVTVKWHTD…GTTQFYIAAS (112 aa). N-linked (GlcNAc...) asparagine glycosylation is found at asparagine 104 and asparagine 143. Tyrosine 278 is a catalytic residue. 2 cysteine pairs are disulfide-bonded: cysteine 280/cysteine 330 and cysteine 319/cysteine 342. Cu(2+) is bound by residues histidine 312 and histidine 313. Cu(2+) is bound by residues histidine 380, histidine 458, histidine 460, and methionine 533. Intrachain disulfides connect cysteine 437/cysteine 549, cysteine 441/cysteine 606, and cysteine 512/cysteine 534. Histidine 458 is an active-site residue. The N-linked (GlcNAc...) asparagine glycan is linked to asparagine 555.

Belongs to the copper type II ascorbate-dependent monooxygenase family. Cu(2+) serves as cofactor. In terms of tissue distribution, present in synaptic regions of RIC interneurons. Present in gonadal sheath cells of hermaphrodites (at protein level).

It is found in the membrane. It carries out the reaction tyramine + L-ascorbate + O2 = (R)-octopamine + L-dehydroascorbate + H2O. Functionally, required for the conversion of tyramine to octopamine, a precursor of octapamine but probably itself a neurotransmitter. Involved in the regulation of egg laying, which is inhibited by tyramine. Due to its involvement in octopamine biosynthesis, also required for crtc-1-dependent regulation of AMPK-mediated longevity. The protein is Tyramine beta-hydroxylase of Caenorhabditis elegans.